The chain runs to 371 residues: Aminomethyltransferase (371 aa).

It belongs to the GcvT family. In terms of assembly, the glycine cleavage system is composed of four proteins: P, T, L and H.

The catalysed reaction is N(6)-[(R)-S(8)-aminomethyldihydrolipoyl]-L-lysyl-[protein] + (6S)-5,6,7,8-tetrahydrofolate = N(6)-[(R)-dihydrolipoyl]-L-lysyl-[protein] + (6R)-5,10-methylene-5,6,7,8-tetrahydrofolate + NH4(+). The glycine cleavage system catalyzes the degradation of glycine. This Cutibacterium acnes (strain DSM 16379 / KPA171202) (Propionibacterium acnes) protein is Aminomethyltransferase.